Consider the following 425-residue polypeptide: Serine--tRNA ligase (425 aa).

Residue T235–E237 participates in L-serine binding. R266 to E268 contacts ATP. E289 is a binding site for L-serine. Residue E353–S356 participates in ATP binding. S389 lines the L-serine pocket.

It belongs to the class-II aminoacyl-tRNA synthetase family. Type-1 seryl-tRNA synthetase subfamily. As to quaternary structure, homodimer. The tRNA molecule binds across the dimer.

It is found in the cytoplasm. It catalyses the reaction tRNA(Ser) + L-serine + ATP = L-seryl-tRNA(Ser) + AMP + diphosphate + H(+). It carries out the reaction tRNA(Sec) + L-serine + ATP = L-seryl-tRNA(Sec) + AMP + diphosphate + H(+). The protein operates within aminoacyl-tRNA biosynthesis; selenocysteinyl-tRNA(Sec) biosynthesis; L-seryl-tRNA(Sec) from L-serine and tRNA(Sec): step 1/1. In terms of biological role, catalyzes the attachment of serine to tRNA(Ser). Is also able to aminoacylate tRNA(Sec) with serine, to form the misacylated tRNA L-seryl-tRNA(Sec), which will be further converted into selenocysteinyl-tRNA(Sec). This is Serine--tRNA ligase from Desulfotalea psychrophila (strain LSv54 / DSM 12343).